Consider the following 1577-residue polypeptide: MKSKNFKLSPSGRLAASLAIIFVSLNAYGNGIVPDAGHQGPDVSAVNGGTQVINIVTPNNEGISHNQYQDFNVGKPGAVFNNALEAGQSQLAGHLNANSNLNGQAASLILNEVVSRNPSFLLGQQEVFGIAAEYVLSNPNGITCDGCGFINTSRSSLVVGNPLFENGQLKGYSTLNNTNLLSLGKNGLNTTGLLDLIAPRIDSRGKITAAEISAFTGQNTFSQHFDILSSQKPVSALDSYFFGSMQSGRIRIINTAEGSGVKLAGKFTADNDLSVKADNIQTDSQVRYDSYDKDGSENYQNYRGGITVNNSGSSQTLTKTELKGKNITLVASSHNQIKASDLMGDDITLQGADLTIDGKQLQQKETDIDNRWFYSWKYDVTKEKEQIQQIGSQIDAKNNATLTATKGDVTLDAAKINAGNNLAINANKDIHINGLVEKESRSENGNKRNHTSRLESGSWSNSHQTETLKASELTAGKDLGLDAQGSITAQGAKLHANENVLVNAKDNINLNVQKTNNDKTVTDNHVMWGGIGGGQNKNNNNQQQVSHATQLTADGQLLLAADNNVNITGSQVKGNQGAFVKTTQGDVVIDNALSETISKIDERTGTAFNITKSSHKNETNKQTSTGSELISDAQLTVVSGNDVNVIGSLIKSADKLGIHSLGDINVKSAQQVTKIDDEKTSLAITGHAKEVEDKQYSAGFHITHTTNKNTSTETEQANSTISGANVDLQANKDVTFAGSDLKTTAGNASITGDNVAFVSTENKKQTDNTDTTISGGFSYTGGVDKVGSKADFQYDKQHTQTEVTKNRGSQTEVAGDLTITANKDLLHEGASHHVEGRYQESGENIQHLAVNDSETSKTDSLNVGIDVGVNLDYSGVTKPVKKAIEDGVNTTKPGNNTDLTKKVTARDAIANLANLSNLETPNVGVEVGIKGGGSQQSQTDSQAVSTSINAGKIDIDSNNKLHDQGTHYQSTQEGISLTANTHTSEATLDKHQTTFHETKGGGQIGVSTKTGSDITVAIKGEGQTTDNALMETKAKGSQFTSNGDISINVGENAHYEGAQFDAQKGKTVINAGGDLTLAQATDTHSESQSNVNGSANLKVGTTPESKDYGGGFNAGTTHHSKEQTTAKVGTITGSQGIELNAGHNLTLQGTHLSSEQDIALNATNKVDLQSASSEHTEKGNNLSGGVQAGFGKKMTDDASSVNGLGSAQFAIGKQDEKSVSREGGTINNSGNLTINGNSVHLQGAQVNSKDTQLTSQSGDIEITSAQSTDYKNNWGTDIGFNGKKTNNTPKEVTEEKPATSIHNIGGKLLVNVEDQQKTSHQNATLETGTLTINSNKDLTLSGANVTADSVTGNVGGSLNIASQKESDRHVTVGVNVGYNHTNDPKSSQVNKTAKAGGSLLEKTIKDTIDSGIKSSTDAISDKYNSLSSTIADKTGISDETKAKIDQGFGKVGNGIKNIVTGAEGHTANADIKVTHVDNDAVTKTTSLTSNNDLSLNVNGSTKLTGAEIVSQQGQVDLGGSSVKLENIEGHHYEAGADLDLKSSVVDLAKQLVGGDISFKSPVKTNETVNTKASISEK.

Residues 1 to 29 (MKSKNFKLSPSGRLAASLAIIFVSLNAYG) form the signal peptide. Residues 437–446 (EKESRSENGN) are compositionally biased toward basic and acidic residues. Disordered regions lie at residues 437-467 (EKESRSENGNKRNHTSRLESGSWSNSHQTET), 1081-1103 (TDTHSESQSNVNGSANLKVGTTP), 1169-1188 (QSASSEHTEKGNNLSGGVQA), and 1213-1232 (KQDEKSVSREGGTINNSGNL). Composition is skewed to polar residues over residues 454 to 467 (LESGSWSNSHQTET), 1081 to 1095 (TDTHSESQSNVNGSA), and 1169 to 1184 (QSASSEHTEKGNNLSG).

It is found in the cell outer membrane. Its function is as follows. Bacterial hemolysins are exotoxins that attack blood cell membranes and cause cell rupture by mechanisms not clearly defined. In terms of biological role, cell-bound hemolysin, which releases heme-iron from erythrocytes by interaction with the erythrocyte membrane. HpmA requires HpmB function. This is Hemolysin (hpmA) from Proteus mirabilis.